We begin with the raw amino-acid sequence, 1358 residues long: MIGKGGFGVVVKSRNKLDCRYYAIKKIKTKGYTDSNQEPLTNKLLREVTTLSRLHHQFVVRYYQAWIEKSCDSFQSLEEGNEDLSGDLETDASEDWFMQSSINSRSIISRDSYSGLSTSNSNVGGANNTAGGGDSVSNANSNKSMIVGNNNKKLTLSSSNTSSSSSLLSNNKSKILNTSKSTSTNTSTSTSTSNTNKNKKISKKKKSKLSPLMKPKNKKNKNNGESEQSSSDSENGENGMKSRIIENASDSYSDDDNNNNNDSNNNYHSDNESDSFSGSISMSDGNGSGYEATDDEDIINNSGSFDDNENDDDDEEDDDDEYDEEDDDYETFDFQDKSRVVSNNSKLSTSSSRKKPPKETHTLYIQMEYCSKKTLKTLIDNVGGIAEEEAFRLLRQIVEGLNHIHSQQIIHRDLKPANIFIDNEQNVKIGDFGLATSGAPVSKSDDLNSSTSNAANNINLSSSTNSTAQQTPMWDLNDENLSMTGGVGTPFYCCPEILEKNTKHYGTKVDMYSLGIIFFEMCFQFQTQMERSNILRDLRDNLKFPPGFESTKPDQTQIIRSLLSRDPTQRPSTKQLLESGLLPSKMEDDILKEAIKTIANPTISLFSYLMEKLFCLSNDEHIMSRYLYTSNPSLTPMHLICREKTFSRLEKIFLNHGSIRIDTPTLFPKNPTNSTHPGAANVAKFLDESGTVVYLPYDLTIPWARHVVIHNIQQAKRYTFSKVYRRSQPGFSPKELYECDFDIIGPSKSRHISDAETLRIIIEIMEEFKDELFGNNSGSNSGSGSGGSINYKIRINHYGLLDSILSECGVEKRFFTVVYQTVAQLHWRLNWAQVAQSLKEHGLSASIVSNISTYFRQRGELAQCVTQLESLLANHKEATTGISDLKILVRNLQMINIIPRFLLDLSLIHNHQYYEGLVFQAYIERPTLSNPSRTEIIMSGGRYDKLIKSLHPNPSLSNNIVSGVGVTLACEKIVNSVLNYRQHLLNNCFNTTYTRRNKDPPNSNNNPNNNNLNNNVSIFTKFQSHIEVFVCSLGSSLLGEKLQVASQLWSAGIKADYSQTDYYSSEDIYSNCRENGIPWVVILREKAFQIGKLKVKQIETRQERTVARKDLVDFFLKSRKHNVDSKNIIQNTSSSDLSNLIGGINNSGSGGSGGSGGGSSMSSGGGGGGNSNIGGSDHHHHGHHSNQSTSSSGNSNNSNTQQTSPIQHHVHFSNTKSIIGSSGIISNATFSGGSSSSSNIIHFDEPTDSFSTQIVYQGVEEIKKSKIETLVQTSLSKLFRGFIQSKSSTIRVIVTDLAYSVIRDLQISESHDNISKFQRVSKEKLLQLKNQIFKWKVYPFIVIHSIKDDKSVIFNSVV.

The 582-residue stretch at 1–582 (MIGKGGFGVV…TKQLLESGLL (582 aa)) folds into the Protein kinase domain. Residues 2-10 (IGKGGFGVV) and K25 contribute to the ATP site. Positions 125-359 (GANNTAGGGD…SSSRKKPPKE (235 aa)) are disordered. Residues 136-148 (VSNANSNKSMIVG) are compositionally biased toward polar residues. Positions 149–196 (NNNKKLTLSSSNTSSSSSLLSNNKSKILNTSKSTSTNTSTSTSTSNTN) are enriched in low complexity. The segment covering 197–208 (KNKKISKKKKSK) has biased composition (basic residues). The span at 258–285 (NNNNDSNNNYHSDNESDSFSGSISMSDG) shows a compositional bias: low complexity. Residues 306 to 333 (DDNENDDDDEEDDDDEYDEEDDDYETFD) show a composition bias toward acidic residues. Residues 342-351 (SNNSKLSTSS) are compositionally biased toward low complexity. The Proton acceptor role is filled by D413. Disordered stretches follow at residues 445–470 (DDLNSSTSNAANNINLSSSTNSTAQQ) and 1148–1204 (GSGG…QQTS). Low complexity predominate over residues 447 to 466 (LNSSTSNAANNINLSSSTNS). Positions 1148-1172 (GSGGSGGSGGGSSMSSGGGGGGNSN) are enriched in gly residues. Positions 1185–1199 (SNQSTSSSGNSNNSN) are enriched in low complexity.

This sequence belongs to the protein kinase superfamily. Ser/Thr protein kinase family. GCN2 subfamily.

It carries out the reaction L-seryl-[protein] + ATP = O-phospho-L-seryl-[protein] + ADP + H(+). The enzyme catalyses L-threonyl-[protein] + ATP = O-phospho-L-threonyl-[protein] + ADP + H(+). The polypeptide is Probable serine/threonine-protein kinase ifkB (ifkB) (Dictyostelium discoideum (Social amoeba)).